A 314-amino-acid chain; its full sequence is Olfactory receptor 9Q2 (314 aa).

Topologically, residues M1–V25 are extracellular. N5 carries an N-linked (GlcNAc...) asparagine glycan. The helical transmembrane segment at P26–I46 threads the bilayer. Residues L47 to R54 lie on the Cytoplasmic side of the membrane. Residues L55–S75 traverse the membrane as a helical segment. The Extracellular segment spans residues A76–A99. A disulfide bridge links C97 with C189. A helical transmembrane segment spans residues Q100 to Y120. The Cytoplasmic portion of the chain corresponds to D121 to K139. The helical transmembrane segment at A140–T160 threads the bilayer. Over V161 to V197 the chain is Extracellular. The helical transmembrane segment at V198 to S217 threads the bilayer. At Y218–T237 the chain is on the cytoplasmic side. A helical transmembrane segment spans residues F238–M258. Over Y259–D271 the chain is Extracellular. A helical transmembrane segment spans residues R272–L292. At R293 to P314 the chain is on the cytoplasmic side.

It belongs to the G-protein coupled receptor 1 family.

The protein resides in the cell membrane. Functionally, odorant receptor. The chain is Olfactory receptor 9Q2 (OR9Q2) from Homo sapiens (Human).